The sequence spans 642 residues: Sodium-dependent phosphate transport protein 2A (642 aa).

The Cytoplasmic segment spans residues M1–K106. Residues S14 and S37 each carry the phosphoserine modification. The helical transmembrane segment at L107–F128 threads the bilayer. Residues Q129–N148 lie on the Extracellular side of the membrane. Residues P149–S166 traverse the membrane as a helical segment. At S167–T168 the chain is on the cytoplasmic side. Residues A169–I188 form a helical membrane-spanning segment. The Extracellular portion of the chain corresponds to P189–D350. Disulfide bonds link C228-C525 and C309-C339. Residues N301, N326, and N333 are each glycosylated (N-linked (GlcNAc...) asparagine). A helical membrane pass occupies residues L351 to V373. Residues K374 to M415 are Cytoplasmic-facing. Residues T416–S439 form a helical membrane-spanning segment. At I440–K469 the chain is on the extracellular side. The chain crosses the membrane as a helical span at residues L470–L490. The Cytoplasmic portion of the chain corresponds to W491–W516. Position 511 is a phosphothreonine; by PKC (T511). Residues F517–S537 form a helical membrane-spanning segment. At M538–R542 the chain is on the extracellular side. Residues A543–L564 traverse the membrane as a helical segment. Topologically, residues Q565–L642 are cytoplasmic. The residue at position 610 (S610) is a Phosphoserine. T626 carries the phosphothreonine modification. S628 carries the phosphoserine modification.

This sequence belongs to the SLC34A transporter family. Interacts via its C-terminal region with NHERF4. Interacts with NHERF1. Interacts with TMEM174; regulates SLC34A1 internalization by PTH and FGF23. As to expression, expressed in the kidney cortex.

The protein resides in the apical cell membrane. It is found in the cell membrane. The enzyme catalyses 3 Na(+)(out) + phosphate(out) = 3 Na(+)(in) + phosphate(in). Transport activity is significantly increased in response to dietary phosphate deprivation. In terms of biological role, involved in actively transporting phosphate into cells via Na(+) cotransport in the renal brush border membrane. The cotransport has a Na(+):Pi stoichiometry of 3:1 and is electrogenic. The chain is Sodium-dependent phosphate transport protein 2A from Oryctolagus cuniculus (Rabbit).